Reading from the N-terminus, the 298-residue chain is Probable endonuclease LCL3 (298 aa).

The tract at residues 1 to 24 (MRWPWSGHDEEKKRNAATRSKRAE) is disordered. The chain crosses the membrane as a helical span at residues 39-56 (LVPSVALTVSTVLGLRLY). One can recognise a TNase-like domain in the interval 77–262 (RTLFGQVTSV…KESRAGMWAK (186 aa)). Arg153 is a catalytic residue. Asp158 contributes to the Ca(2+) binding site. Residues Glu161 and Arg201 contribute to the active site. The interval 269–298 (LGGAGTKAPESPREYKSRHTAAEKQKKAAW) is disordered. Residues 278-298 (ESPREYKSRHTAAEKQKKAAW) show a composition bias toward basic and acidic residues.

This sequence belongs to the LCL3 family.

It localises to the mitochondrion. The protein resides in the membrane. The chain is Probable endonuclease LCL3 (LCL3) from Leptosphaeria maculans (strain JN3 / isolate v23.1.3 / race Av1-4-5-6-7-8) (Blackleg fungus).